The chain runs to 174 residues: Large ribosomal subunit protein uL10 (174 aa).

Belongs to the universal ribosomal protein uL10 family. As to quaternary structure, part of the ribosomal stalk of the 50S ribosomal subunit. The N-terminus interacts with L11 and the large rRNA to form the base of the stalk. The C-terminus forms an elongated spine to which L12 dimers bind in a sequential fashion forming a multimeric L10(L12)X complex.

Forms part of the ribosomal stalk, playing a central role in the interaction of the ribosome with GTP-bound translation factors. The sequence is that of Large ribosomal subunit protein uL10 from Acidiphilium cryptum (strain JF-5).